The primary structure comprises 541 residues: FIVLISATAHFIFRRREPTAFQYACFQAGLALLLSVLLREPFGAVVLILLALNFLLGVQIALYRLFWHDLRVFPGPRLAAITQGWILREAYLGRSRFSMKEVGETYGDWVRIGPNELCTTSIEALSTIMGPKGWPKGPSYDSGITKGDSGGDSVLTIKNLPEHATRRRIWNKAFTPNAINGYLPSIEIRLEEMLSVIDTEIKKGESVDLCLQLGCFVYDTMCDMAFGALAGSAFSKTQEDKYRILTHMGRVVRQVGIVRNMPWLTPIVKAWPSSHRREQNEFKEFTKSMFLRRKNQGLGKQLDVFHYLLGEDTETGTRLTEAELAADSTLLVITGADTTRTVLLAFFLYLLKHPNYMEQLQAELLAAPDLSPPSLSRLEYLNACLQETMRLQPPSPANLQRICPPGGAVICGRQIPEGTKVRFSNYAIHRDERYFSRAEEFRPQRWLQKAKDDLGNQGEEKERLDQRAFFGFLIGPGACVAKNLAWMEMRLVVATILTNFDLSFAPGFDPVAFESSWTDAYLLLIEEPFEVMFTPKSQRMR.

Cys-479 contacts heme.

Belongs to the cytochrome P450 family. The cofactor is heme.

This Uromyces fabae (Rust fungus) protein is Cytochrome P450 67 (CYP67).